A 218-amino-acid polypeptide reads, in one-letter code: dTTP/UTP pyrophosphatase (218 aa).

The active-site Proton acceptor is aspartate 69.

The protein belongs to the Maf family. YhdE subfamily. The cofactor is a divalent metal cation.

It is found in the cytoplasm. The enzyme catalyses dTTP + H2O = dTMP + diphosphate + H(+). The catalysed reaction is UTP + H2O = UMP + diphosphate + H(+). Functionally, nucleoside triphosphate pyrophosphatase that hydrolyzes dTTP and UTP. May have a dual role in cell division arrest and in preventing the incorporation of modified nucleotides into cellular nucleic acids. This is dTTP/UTP pyrophosphatase from Thermomicrobium roseum (strain ATCC 27502 / DSM 5159 / P-2).